Here is a 380-residue protein sequence, read N- to C-terminus: Bifunctional enzyme IspD/IspF (380 aa).

The 2-C-methyl-D-erythritol 4-phosphate cytidylyltransferase stretch occupies residues 1–224 (MTIPATYAAI…ERILGDAMDI (224 aa)). The segment at 225-380 (RLGNGFDVHA…SIATATLVKG (156 aa)) is 2-C-methyl-D-erythritol 2,4-cyclodiphosphate synthase. 2 residues coordinate a divalent metal cation: D231 and H233. 4-CDP-2-C-methyl-D-erythritol 2-phosphate is bound by residues 231–233 (DVH) and 257–258 (HS). H265 lines the a divalent metal cation pocket. 4-CDP-2-C-methyl-D-erythritol 2-phosphate is bound by residues 279–281 (DIG), 355–358 (TTSE), F362, and R365.

In the N-terminal section; belongs to the IspD/TarI cytidylyltransferase family. IspD subfamily. The protein in the C-terminal section; belongs to the IspF family. The cofactor is a divalent metal cation.

The enzyme catalyses 2-C-methyl-D-erythritol 4-phosphate + CTP + H(+) = 4-CDP-2-C-methyl-D-erythritol + diphosphate. It catalyses the reaction 4-CDP-2-C-methyl-D-erythritol 2-phosphate = 2-C-methyl-D-erythritol 2,4-cyclic diphosphate + CMP. Its pathway is isoprenoid biosynthesis; isopentenyl diphosphate biosynthesis via DXP pathway; isopentenyl diphosphate from 1-deoxy-D-xylulose 5-phosphate: step 2/6. The protein operates within isoprenoid biosynthesis; isopentenyl diphosphate biosynthesis via DXP pathway; isopentenyl diphosphate from 1-deoxy-D-xylulose 5-phosphate: step 4/6. Its function is as follows. Bifunctional enzyme that catalyzes the formation of 4-diphosphocytidyl-2-C-methyl-D-erythritol from CTP and 2-C-methyl-D-erythritol 4-phosphate (MEP) (IspD), and catalyzes the conversion of 4-diphosphocytidyl-2-C-methyl-D-erythritol 2-phosphate (CDP-ME2P) to 2-C-methyl-D-erythritol 2,4-cyclodiphosphate (ME-CPP) with a corresponding release of cytidine 5-monophosphate (CMP) (IspF). The polypeptide is Bifunctional enzyme IspD/IspF (Paracoccus denitrificans (strain Pd 1222)).